A 78-amino-acid chain; its full sequence is Acyl carrier protein (78 aa).

The Carrier domain maps to 2–77 (SDIEQRVKQA…SAIDYVTKKL (76 aa)). Ser-37 carries the O-(pantetheine 4'-phosphoryl)serine modification.

This sequence belongs to the acyl carrier protein (ACP) family. In terms of processing, 4'-phosphopantetheine is transferred from CoA to a specific serine of apo-ACP by AcpS. This modification is essential for activity because fatty acids are bound in thioester linkage to the sulfhydryl of the prosthetic group.

The protein resides in the cytoplasm. Its pathway is lipid metabolism; fatty acid biosynthesis. Its function is as follows. Carrier of the growing fatty acid chain in fatty acid biosynthesis. The protein is Acyl carrier protein of Acinetobacter baylyi (strain ATCC 33305 / BD413 / ADP1).